A 101-amino-acid chain; its full sequence is Small ribosomal subunit protein uS14A (101 aa).

A disordered region spans residues 47–66 (ALASLPRDSNPNRVTNRCAL).

This sequence belongs to the universal ribosomal protein uS14 family. As to quaternary structure, part of the 30S ribosomal subunit. Contacts proteins S3 and S10.

Functionally, binds 16S rRNA, required for the assembly of 30S particles and may also be responsible for determining the conformation of the 16S rRNA at the A site. The protein is Small ribosomal subunit protein uS14A of Myxococcus xanthus (strain DK1622).